A 249-amino-acid polypeptide reads, in one-letter code: 5'-nucleotidase SurE (249 aa).

Residues Asp8, Asp9, Ser39, and Asn91 each contribute to the a divalent metal cation site.

The protein belongs to the SurE nucleotidase family. The cofactor is a divalent metal cation.

It localises to the cytoplasm. The catalysed reaction is a ribonucleoside 5'-phosphate + H2O = a ribonucleoside + phosphate. Its function is as follows. Nucleotidase that shows phosphatase activity on nucleoside 5'-monophosphates. This chain is 5'-nucleotidase SurE, found in Pseudomonas syringae pv. syringae (strain B728a).